A 349-amino-acid polypeptide reads, in one-letter code: Lipoyl synthase (349 aa).

C55, C60, C66, C81, C85, C88, and S292 together coordinate [4Fe-4S] cluster. The 215-residue stretch at 67–281 (WEDREATFLI…SDAAYELGIK (215 aa)) folds into the Radical SAM core domain. Positions 321-349 (LDSTTSQEASTLLERYGASEDTPVTASRR) are disordered.

The protein belongs to the radical SAM superfamily. Lipoyl synthase family. It depends on [4Fe-4S] cluster as a cofactor.

The protein resides in the cytoplasm. It carries out the reaction [[Fe-S] cluster scaffold protein carrying a second [4Fe-4S](2+) cluster] + N(6)-octanoyl-L-lysyl-[protein] + 2 oxidized [2Fe-2S]-[ferredoxin] + 2 S-adenosyl-L-methionine + 4 H(+) = [[Fe-S] cluster scaffold protein] + N(6)-[(R)-dihydrolipoyl]-L-lysyl-[protein] + 4 Fe(3+) + 2 hydrogen sulfide + 2 5'-deoxyadenosine + 2 L-methionine + 2 reduced [2Fe-2S]-[ferredoxin]. The protein operates within protein modification; protein lipoylation via endogenous pathway; protein N(6)-(lipoyl)lysine from octanoyl-[acyl-carrier-protein]: step 2/2. Catalyzes the radical-mediated insertion of two sulfur atoms into the C-6 and C-8 positions of the octanoyl moiety bound to the lipoyl domains of lipoate-dependent enzymes, thereby converting the octanoylated domains into lipoylated derivatives. The polypeptide is Lipoyl synthase (Corynebacterium jeikeium (strain K411)).